We begin with the raw amino-acid sequence, 250 residues long: L-ascorbate peroxidase 1, cytosolic (250 aa).

Catalysis depends on histidine 42, which acts as the Proton acceptor. Residues 113–137 form a disordered region; it reads VPFHPGREDKPAPPPEGRLPDATKG. Histidine 163 lines the heme b pocket. 4 residues coordinate K(+): threonine 164, threonine 180, asparagine 182, and aspartate 187.

The protein belongs to the peroxidase family. Ascorbate peroxidase subfamily. Heme b serves as cofactor.

Its subcellular location is the cytoplasm. The enzyme catalyses L-ascorbate + H2O2 = L-dehydroascorbate + 2 H2O. Plays a key role in hydrogen peroxide removal. This Oryza sativa subsp. indica (Rice) protein is L-ascorbate peroxidase 1, cytosolic (APX1).